Consider the following 293-residue polypeptide: ATP synthase gamma chain (293 aa).

This sequence belongs to the ATPase gamma chain family. F-type ATPases have 2 components, CF(1) - the catalytic core - and CF(0) - the membrane proton channel. CF(1) has five subunits: alpha(3), beta(3), gamma(1), delta(1), epsilon(1). CF(0) has three main subunits: a, b and c.

The protein resides in the cell membrane. Its function is as follows. Produces ATP from ADP in the presence of a proton gradient across the membrane. The gamma chain is believed to be important in regulating ATPase activity and the flow of protons through the CF(0) complex. This chain is ATP synthase gamma chain, found in Streptococcus sanguinis.